Here is a 201-residue protein sequence, read N- to C-terminus: MQRAWILLTLGLMACVSAETRAELTSDKDMYLDSSSIEEASGLYPIDDDDYSSASGSGAYEDKGSPDLTTSQLIPRISLTSAAPEVETMTLKTQSITPTQTESPEETDKKEFEISEAEEKQDPAVKSTDVYTEKHSDNLFKRTEVLAAVIAGGVIGFLFAIFLILLLVYRMRKKDEGSYDLGERKPSSAAYQKAPTKEFYA.

Positions 1–18 (MQRAWILLTLGLMACVSA) are cleaved as a signal peptide. The Extracellular portion of the chain corresponds to 19–144 (ETRAELTSDK…HSDNLFKRTE (126 aa)). Ser-41, Ser-55, and Ser-57 each carry an O-linked (Xyl...) (glycosaminoglycan) serine glycan. Disordered stretches follow at residues 42 to 69 (GLYP…PDLT) and 88 to 129 (TMTL…KSTD). Positions 90-102 (TLKTQSITPTQTE) are enriched in polar residues. Positions 106 to 123 (ETDKKEFEISEAEEKQDP) are enriched in basic and acidic residues. Residue Ser-115 is modified to Phosphoserine. Residues 145 to 169 (VLAAVIAGGVIGFLFAIFLILLLVY) form a helical membrane-spanning segment. Residues 170–201 (RMRKKDEGSYDLGERKPSSAAYQKAPTKEFYA) lie on the Cytoplasmic side of the membrane. The disordered stretch occupies residues 178-201 (SYDLGERKPSSAAYQKAPTKEFYA). Residue Ser-187 is modified to Phosphoserine.

The protein belongs to the syndecan proteoglycan family. Interacts (via cytoplasmic domain) with SARM1. Forms a complex with SDCBP and PDCD6IP. Post-translationally, O-glycosylated; contains both heparan sulfate and chondroitin sulfate.

It localises to the membrane. In terms of biological role, cell surface proteoglycan which regulates dendritic arbor morphogenesis. In Rattus norvegicus (Rat), this protein is Syndecan-2 (Sdc2).